The chain runs to 427 residues: Adenylosuccinate synthetase (427 aa).

GTP-binding positions include 12 to 18 (GDEGKGK) and 40 to 42 (GHT). Aspartate 13 acts as the Proton acceptor in catalysis. 2 residues coordinate Mg(2+): aspartate 13 and glycine 40. Residues 13-16 (DEGK), 38-41 (NAGH), threonine 127, arginine 141, glutamine 222, threonine 237, and arginine 301 each bind IMP. Histidine 41 acts as the Proton donor in catalysis. Substrate is bound at residue 297-303 (VVTKRPR). Residues arginine 303, 329-331 (SLD), and 411-413 (AVG) contribute to the GTP site.

It belongs to the adenylosuccinate synthetase family. As to quaternary structure, homodimer. Requires Mg(2+) as cofactor.

The protein localises to the cytoplasm. It carries out the reaction IMP + L-aspartate + GTP = N(6)-(1,2-dicarboxyethyl)-AMP + GDP + phosphate + 2 H(+). Its pathway is purine metabolism; AMP biosynthesis via de novo pathway; AMP from IMP: step 1/2. Functionally, plays an important role in the de novo pathway of purine nucleotide biosynthesis. Catalyzes the first committed step in the biosynthesis of AMP from IMP. In Leuconostoc mesenteroides subsp. mesenteroides (strain ATCC 8293 / DSM 20343 / BCRC 11652 / CCM 1803 / JCM 6124 / NCDO 523 / NBRC 100496 / NCIMB 8023 / NCTC 12954 / NRRL B-1118 / 37Y), this protein is Adenylosuccinate synthetase.